A 236-amino-acid chain; its full sequence is Pyridoxine 5'-phosphate synthase (236 aa).

3-amino-2-oxopropyl phosphate is bound at residue N6. 1-deoxy-D-xylulose 5-phosphate is bound at residue 8 to 9; sequence DH. Residue R17 coordinates 3-amino-2-oxopropyl phosphate. H42 functions as the Proton acceptor in the catalytic mechanism. R44 and H49 together coordinate 1-deoxy-D-xylulose 5-phosphate. E69 (proton acceptor) is an active-site residue. T99 contacts 1-deoxy-D-xylulose 5-phosphate. The active-site Proton donor is H190. Residues G191 and 212-213 contribute to the 3-amino-2-oxopropyl phosphate site; that span reads GH.

This sequence belongs to the PNP synthase family. As to quaternary structure, homooctamer; tetramer of dimers.

The protein localises to the cytoplasm. It catalyses the reaction 3-amino-2-oxopropyl phosphate + 1-deoxy-D-xylulose 5-phosphate = pyridoxine 5'-phosphate + phosphate + 2 H2O + H(+). Its pathway is cofactor biosynthesis; pyridoxine 5'-phosphate biosynthesis; pyridoxine 5'-phosphate from D-erythrose 4-phosphate: step 5/5. Its function is as follows. Catalyzes the complicated ring closure reaction between the two acyclic compounds 1-deoxy-D-xylulose-5-phosphate (DXP) and 3-amino-2-oxopropyl phosphate (1-amino-acetone-3-phosphate or AAP) to form pyridoxine 5'-phosphate (PNP) and inorganic phosphate. In Chloroherpeton thalassium (strain ATCC 35110 / GB-78), this protein is Pyridoxine 5'-phosphate synthase.